The primary structure comprises 124 residues: Probable glycine cleavage system H protein (124 aa).

The Lipoyl-binding domain occupies 22–104; that stretch reads TGRVGISEFA…FGDGWLVEID (83 aa). N6-lipoyllysine is present on K63.

Belongs to the GcvH family. In terms of assembly, the glycine cleavage system is composed of four proteins: P, T, L and H. (R)-lipoate is required as a cofactor.

In terms of biological role, the glycine cleavage system catalyzes the degradation of glycine. The H protein shuttles the methylamine group of glycine from the P protein to the T protein. In Halobacterium salinarum (strain ATCC 700922 / JCM 11081 / NRC-1) (Halobacterium halobium), this protein is Probable glycine cleavage system H protein.